The primary structure comprises 2595 residues: Glucosylceramide transporter ABCA12 (2595 aa).

A helical membrane pass occupies residues 23-43 (PLWTLVLILWPVIIFIILAIT). Residues 109 to 119 (LKKPSNPKRDS) are compositionally biased toward basic and acidic residues. The interval 109-143 (LKKPSNPKRDSNLSLRSTQVPERSHTSLATVPPRP) is disordered. Residues asparagine 120, asparagine 156, asparagine 174, asparagine 214, asparagine 275, asparagine 331, asparagine 365, asparagine 381, asparagine 410, asparagine 433, asparagine 455, asparagine 526, asparagine 541, asparagine 574, asparagine 605, asparagine 645, asparagine 749, asparagine 773, asparagine 812, asparagine 823, asparagine 854, asparagine 917, and asparagine 960 are each glycosylated (N-linked (GlcNAc...) asparagine). Over residues 120-137 (NLSLRSTQVPERSHTSLA) the composition is skewed to polar residues. The next 3 membrane-spanning stretches (helical) occupy residues 1062–1082 (VSYS…AAFV), 1109–1129 (FAWL…LIVI), and 1142–1162 (FILF…SYLI). A glycan (N-linked (GlcNAc...) asparagine) is linked at asparagine 1167. The next 3 helical transmembrane spans lie at 1171–1191 (IAAL…IVLV), 1197–1217 (LSYV…SYAS), and 1247–1267 (FGWL…IAWY). Asparagine 1319 is a glycosylation site (N-linked (GlcNAc...) asparagine). The region spanning 1346-1577 (VALHGVTKIY…FGDGYHLTLT (232 aa)) is the ABC transporter 1 domain. 1378-1385 (GPNGAGKT) contacts ATP. Residues asparagine 1524, asparagine 1663, asparagine 1673, asparagine 1686, asparagine 1690, and asparagine 1704 are each glycosylated (N-linked (GlcNAc...) asparagine). A disordered region spans residues 1672 to 1703 (SNMSLEHLTQRKVGNPSANGTSTPDDLSVSSS). Over residues 1687 to 1703 (PSANGTSTPDDLSVSSS) the composition is skewed to polar residues. The chain crosses the membrane as a helical span at residues 1747–1767 (LIAQVILPIVFVATAMGLGTL). 5 N-linked (GlcNAc...) asparagine glycosylation sites follow: asparagine 1819, asparagine 1835, asparagine 1876, asparagine 1921, and asparagine 1952. The next 7 membrane-spanning stretches (helical) occupy residues 1979-1999 (ATIS…GYSV), 2035-2055 (FIYD…VIAI), 2072-2092 (LLLL…AGLF), 2103-2123 (VCVN…VYFL), 2143-2163 (IFLI…SQQQ), 2187-2207 (GAMF…RLLI), and 2270-2290 (IIAV…GLLG). The 236-residue stretch at 2254–2489 (VQLHRLTKTY…FGRGFTVKVH (236 aa)) folds into the ABC transporter 2 domain. 2290–2297 (GVNGAGKT) serves as a coordination point for ATP. N-linked (GlcNAc...) asparagine glycosylation is found at asparagine 2318, asparagine 2542, and asparagine 2547. Over residues 2575-2587 (VDTSSQGSTISVD) the composition is skewed to polar residues. Residues 2575-2595 (VDTSSQGSTISVDSQEDQLDS) form a disordered region.

This sequence belongs to the ABC transporter superfamily. ABCA family. Interacts with NR1H2 and ABCA1; this interaction is required for ABCA1 localization to the cell surface and is necessary for its normal activity and stability. Expressed in a number of other tissues besides skin, including heart, intestine, stomach, and kidney. Expressed mainly in the granular layer of the skin. Expressed in lung. Expressed in alpha and beta cells of pancreatic islets.

It is found in the cytoplasmic vesicle. The protein resides in the secretory vesicle membrane. The protein localises to the golgi apparatus membrane. The catalysed reaction is ATP + H2O + phospholipidSide 1 = ADP + phosphate + phospholipidSide 2.. The enzyme catalyses a beta-D-glucosylceramide(in) + ATP + H2O = a beta-D-glucosylceramide(out) + ADP + phosphate + H(+). Functionally, transports lipids such as glucosylceramides from the outer to the inner leaflet of lamellar granules (LGs) membrane, whereby the lipids are finally transported to the keratinocyte periphery via the trans-Golgi network and LGs and released to the apical surface of the granular keratinocytes to form lipid lamellae in the stratum corneum of the epidermis, which is essential for skin barrier function. In the meantime, participates in the transport of the lamellar granules-associated proteolytic enzymes, in turn regulates desquamation and keratinocyte differentiation. Furthermore, is essential for the regulation of cellular cholesterol homeostasis by regulating ABCA1-dependent cholesterol efflux from macrophages through interaction with NR1H2 and ABCA1. Plays pleiotropic roles in regulating glucose stimulated insulin secretion from beta cells, regulating the morphology and fusion of insulin granules, lipid raft abundance and the actin cytoskeleton. Also involved in lung surfactant biogenesis. The protein is Glucosylceramide transporter ABCA12 of Mus musculus (Mouse).